Reading from the N-terminus, the 144-residue chain is Large ribosomal subunit protein uL13 (144 aa).

This sequence belongs to the universal ribosomal protein uL13 family. In terms of assembly, part of the 50S ribosomal subunit.

This protein is one of the early assembly proteins of the 50S ribosomal subunit, although it is not seen to bind rRNA by itself. It is important during the early stages of 50S assembly. The protein is Large ribosomal subunit protein uL13 of Nitratidesulfovibrio vulgaris (strain DSM 19637 / Miyazaki F) (Desulfovibrio vulgaris).